The following is a 365-amino-acid chain: Putative DNA-directed RNA polymerase subunit alpha-like 3 (365 aa).

This sequence belongs to the RNA polymerase alpha chain family. In terms of assembly, in plastids the minimal PEP RNA polymerase catalytic core is composed of four subunits: alpha, beta, beta', and beta''. When a (nuclear-encoded) sigma factor is associated with the core the holoenzyme is formed, which can initiate transcription.

It localises to the plastid. Its subcellular location is the chloroplast. It carries out the reaction RNA(n) + a ribonucleoside 5'-triphosphate = RNA(n+1) + diphosphate. In terms of biological role, DNA-dependent RNA polymerase catalyzes the transcription of DNA into RNA using the four ribonucleoside triphosphates as substrates. The polypeptide is Putative DNA-directed RNA polymerase subunit alpha-like 3 (rpoAL3-A) (Pelargonium hortorum (Common geranium)).